Reading from the N-terminus, the 858-residue chain is Phosphoenolpyruvate carboxylase (858 aa).

Catalysis depends on residues histidine 145 and lysine 531.

This sequence belongs to the PEPCase type 1 family. Mg(2+) serves as cofactor.

It catalyses the reaction oxaloacetate + phosphate = phosphoenolpyruvate + hydrogencarbonate. Forms oxaloacetate, a four-carbon dicarboxylic acid source for the tricarboxylic acid cycle. The polypeptide is Phosphoenolpyruvate carboxylase (Thermus thermophilus (strain ATCC BAA-163 / DSM 7039 / HB27)).